The sequence spans 261 residues: Acetylglutamate kinase (261 aa).

Residues 45 to 46 (GG), arginine 67, and asparagine 162 each bind substrate.

This sequence belongs to the acetylglutamate kinase family. ArgB subfamily.

The protein localises to the cytoplasm. The enzyme catalyses N-acetyl-L-glutamate + ATP = N-acetyl-L-glutamyl 5-phosphate + ADP. The protein operates within amino-acid biosynthesis; L-arginine biosynthesis; N(2)-acetyl-L-ornithine from L-glutamate: step 2/4. Its function is as follows. Catalyzes the ATP-dependent phosphorylation of N-acetyl-L-glutamate. The polypeptide is Acetylglutamate kinase (Bacteroides fragilis (strain ATCC 25285 / DSM 2151 / CCUG 4856 / JCM 11019 / LMG 10263 / NCTC 9343 / Onslow / VPI 2553 / EN-2)).